We begin with the raw amino-acid sequence, 239 residues long: Norbelladine 4'-O-methyltransferase (239 aa).

S-adenosyl-L-methionine is bound by residues Val-55, Glu-77, 79-80 (GV), Ser-85, Asp-103, and Ala-132. A divalent metal cation is bound at residue Asp-155. Asp-157 provides a ligand contact to S-adenosyl-L-methionine. Asp-181 and Asn-182 together coordinate a divalent metal cation.

Belongs to the class I-like SAM-binding methyltransferase superfamily. Cation-dependent O-methyltransferase family. It depends on Mg(2+) as a cofactor. Highly expressed in bulbs. Detected in leaves and inflorescences.

It catalyses the reaction norbelladine + S-adenosyl-L-methionine = 4'-O-methylnorbelladine + S-adenosyl-L-homocysteine + H(+). The protein operates within alkaloid biosynthesis. 4'-O-methyltransferase converting norbelladine to 4'-O-methylnorbelladine. 4'-O-methylnorbelladine is a precursor to all Amaryllidaceae alkaloids such as galanthamine, lycorine and haemanthamine, and including haemanthamine- and crinamine-type alkaloids, promising anticancer agents. Can use norbelladine, N-methylnorbelladine and dopamine as substrate, but not caffeic acid, vanillin, 3,4-dihydroxybenzaldehyde and tyramine. In Narcissus aff. pseudonarcissus MK-2014 (Daffodil), this protein is Norbelladine 4'-O-methyltransferase.